The sequence spans 341 residues: S-adenosylmethionine:tRNA ribosyltransferase-isomerase (341 aa).

The protein belongs to the QueA family. In terms of assembly, monomer.

It is found in the cytoplasm. The catalysed reaction is 7-aminomethyl-7-carbaguanosine(34) in tRNA + S-adenosyl-L-methionine = epoxyqueuosine(34) in tRNA + adenine + L-methionine + 2 H(+). The protein operates within tRNA modification; tRNA-queuosine biosynthesis. In terms of biological role, transfers and isomerizes the ribose moiety from AdoMet to the 7-aminomethyl group of 7-deazaguanine (preQ1-tRNA) to give epoxyqueuosine (oQ-tRNA). In Clostridium botulinum (strain ATCC 19397 / Type A), this protein is S-adenosylmethionine:tRNA ribosyltransferase-isomerase.